Reading from the N-terminus, the 97-residue chain is YcgL domain-containing protein PFLU_1517 (97 aa).

The 85-residue stretch at 3–87 folds into the YcgL domain; sequence RICSIYRSKK…AEDEYIEHLP (85 aa).

In Pseudomonas fluorescens (strain SBW25), this protein is YcgL domain-containing protein PFLU_1517.